Consider the following 476-residue polypeptide: Cysteine--tRNA ligase (476 aa).

Cys27 contacts Zn(2+). A 'HIGH' region motif is present at residues 29–39; the sequence is ITPYDSVHVGH. Zn(2+)-binding residues include Cys213, His238, and Glu242. The 'KMSKS' region signature appears at 271–275; that stretch reads KMSKS. Position 274 (Lys274) interacts with ATP.

This sequence belongs to the class-I aminoacyl-tRNA synthetase family. Zn(2+) is required as a cofactor.

The protein resides in the cytoplasm. It carries out the reaction tRNA(Cys) + L-cysteine + ATP = L-cysteinyl-tRNA(Cys) + AMP + diphosphate. This is Cysteine--tRNA ligase from Pyrobaculum arsenaticum (strain DSM 13514 / JCM 11321 / PZ6).